The chain runs to 110 residues: PHD finger-like domain-containing protein 5A (110 aa).

N-acetylalanine is present on Ala2. At Lys3 the chain carries N6-acetyllysine. Zn(2+)-binding residues include Cys11, Cys23, Cys26, Cys30, Cys33, Cys46, Cys49, Cys58, Cys61, Cys72, and Cys75. Residues 35–51 (SYVRPCTLVRICDECNY) form an interaction with SF3B1 and SF3B3 region. An interaction with SF3B3 region spans residues 79-82 (EKDR). Cys85 is a binding site for Zn(2+). Phosphoserine is present on Ser94.

This sequence belongs to the PHF5 family. As to quaternary structure, component of the 17S U2 SnRNP complex, a ribonucleoprotein complex that contains small nuclear RNA (snRNA) U2 and a number of specific proteins. Part of the SF3B subcomplex of the 17S U2 SnRNP complex. SF3B associates with the splicing subcomplex SF3A and a 12S RNA unit to form the U2 small nuclear ribonucleoproteins complex (U2 snRNP). Within the SF3B complex interacts directly with SF3B1 and SF3B3. Component of the minor spliceosome, which splices U12-type introns. Within this complex, interacts with CRIPT. Interacts (via N-terminus) with U2AF1 and SRSF5; acts to bridge the two. Interacts (via C-terminus) with EP400 and DDX1; acts to bridge the two. Interacts with the PAF1 complex (PAF1C) composed of CDC73, PAF1, LEO1, CTR9, RTF1 and SKIC8. Within the PAF1C interacts directly with CDC73 and SKIC8. Interacts with RNA polymerase II. As to expression, expressed in primary spermatocytes (at protein level). Ubiquitously expressed in pre- and postnatal tissues. Highly expressed in pluripotent embryonic stem cells (ESCs) (at protein level) and induced pluripotent stem cells (iPSCs).

It localises to the nucleus. The protein resides in the nucleus speckle. In terms of biological role, component of the 17S U2 SnRNP complex of the spliceosome, a large ribonucleoprotein complex that removes introns from transcribed pre-mRNAs. The 17S U2 SnRNP complex (1) directly participates in early spliceosome assembly and (2) mediates recognition of the intron branch site during pre-mRNA splicing by promoting the selection of the pre-mRNA branch-site adenosine, the nucleophile for the first step of splicing. Within the 17S U2 SnRNP complex, PHF5A is part of the SF3B subcomplex, which is required for 'A' complex assembly formed by the stable binding of U2 snRNP to the branchpoint sequence in pre-mRNA. Sequence independent binding of SF3A and SF3B subcomplexes upstream of the branch site is essential, it may anchor U2 snRNP to the pre-mRNA. Also acts as a component of the minor spliceosome, which is involved in the splicing of U12-type introns in pre-mRNAs. Also involved in elongation by RNA polymerase II as part of the PAF1 complex (PAF1C). PAF1C is required for maintenance of embryonic stem cell (ESC) self-renewal and cellular reprogramming of stem cells. Maintains pluripotency by recruiting and stabilizing PAF1C on pluripotency genes loci, and by regulating the expression of the pluripotency genes. Regulates the deposition of elongation-associated histone modifications, including dimethylated histone H3 'Lys-79' (H3K79me2) and trimethylated histone H3 'Lys-36' (H3K36me3), on PAF1C targets, self-renewal and pluripotency genes. Regulates RNA polymerase II promoter-proximal pause release of the PAF1C targets and self-renewal genes, and the levels of elongating ('Ser-2' phosphorylated) RNA polymerase II in their gene bodies. Regulates muscle specification in adult stem cells by stabilizing PAF1C in chromatin to promote myogenic differentiation. Acts as a transcriptional regulator by binding to the GJA1/Cx43 promoter and enhancing its up-regulation by ESR1/ER-alpha. This is PHD finger-like domain-containing protein 5A (Phf5a) from Mus musculus (Mouse).